Reading from the N-terminus, the 536-residue chain is 3',5'-cyclic-AMP phosphodiesterase 4C (536 aa).

The interval 49 to 69 is disordered; it reads QALLGTPPQSSQQAAPAEESG. Residues 178-507 form the PDEase domain; that stretch reads VQTDQEEQLA…EWYQSRVPCS (330 aa). H254 serves as the catalytic Proton donor. H254 serves as a coordination point for 3',5'-cyclic AMP. AMP is bound by residues H254 and H258. Zn(2+) is bound by residues H258, H294, D295, and D412. AMP is bound by residues D295, D412, Q463, and F466. D295 serves as a coordination point for Mg(2+). D295 contacts Mn(2+). Positions 463 and 466 each coordinate 3',5'-cyclic AMP. A Phosphoserine modification is found at S507.

Belongs to the cyclic nucleotide phosphodiesterase family. PDE4 subfamily. In terms of assembly, part of a complex containing AKAP5, ADCY5, ADCY6 and PKD2. Zn(2+) is required as a cofactor. The cofactor is Mg(2+). Requires Mn(2+) as cofactor.

The protein localises to the cell projection. Its subcellular location is the cilium. The catalysed reaction is 3',5'-cyclic AMP + H2O = AMP + H(+). The protein operates within purine metabolism; 3',5'-cyclic AMP degradation; AMP from 3',5'-cyclic AMP: step 1/1. In terms of biological role, hydrolyzes the second messenger cAMP, which is a key regulator of many important physiological processes. In Rattus norvegicus (Rat), this protein is 3',5'-cyclic-AMP phosphodiesterase 4C.